Reading from the N-terminus, the 636-residue chain is Protein SOSEKI 2 (636 aa).

The tract at residues 9–103 is DIX-like oligomerization domain; the sequence is HKIEVIYLLS…YVLKALEVMD (95 aa). Disordered stretches follow at residues 164 to 188, 281 to 304, 340 to 393, and 499 to 524; these read VHNN…SRVP, HGRL…TVDI, VEGS…TSAK, and LGSG…VSRP. Polar residues-rich tracts occupy residues 375 to 390 and 499 to 510; these read SSKS…TYET and LGSGQASESFSP.

The protein belongs to the SOSEKI family. As to quaternary structure, homodimer. Forms long polymer filaments with other SOKs proteins polymers crucial for polar localization and biological activity.

It localises to the cell membrane. Its function is as follows. SOSEKI proteins locally interpret global polarity cues and can influence cell division orientation to coordinate cell polarization relative to body axes. The chain is Protein SOSEKI 2 from Physcomitrium patens (Spreading-leaved earth moss).